Consider the following 553-residue polypeptide: Zinc finger protein with KRAB and SCAN domains 3 (553 aa).

The disordered stretch occupies residues 28 to 49 (EQEESSPLAEETSWLGSPGPDR). S33 and S44 each carry phosphoserine. Residues 51–133 (RQRFRAFRYP…ALLEYLDRQL (83 aa)) form the SCAN box domain. A Phosphothreonine modification is found at T136. K176 is covalently cross-linked (Glycyl lysine isopeptide (Lys-Gly) (interchain with G-Cter in SUMO2)). Position 206 is a phosphothreonine (T206). The region spanning 213-273 (LKMEDVAPVL…RAEEYRDQKP (61 aa)) is the KRAB domain. Phosphoserine is present on S223. 5 C2H2-type zinc fingers span residues 313–335 (FYCR…KRIH), 341–363 (YECE…QRVH), 369–391 (YECE…QRTH), 397–419 (YECD…HRIH), and 425–447 (YQCN…QRTH). T448 bears the Phosphothreonine mark. 2 consecutive C2H2-type zinc fingers follow at residues 479 to 501 (YQCN…QKVH) and 507 to 529 (FECQ…QRRH).

The protein belongs to the krueppel C2H2-type zinc-finger protein family. As to expression, expressed in heart, brain, spleen, lung, liver, skeletal muscle, kidney and testis.

The protein resides in the nucleus. The protein localises to the cytoplasm. Functionally, transcriptional factor that binds to the consensus sequence 5'-[GT][AG][AGT]GGGG-3' and acts as a repressor of autophagy. Specifically represses expression of genes involved in autophagy and lysosome biogenesis/function such as MAP1LC3B, ULK1 or WIPI2. Associates with chromatin at the ITGB4 and VEGF promoters. The polypeptide is Zinc finger protein with KRAB and SCAN domains 3 (Zkscan3) (Mus musculus (Mouse)).